The chain runs to 284 residues: GPN-loop GTPase 3 (284 aa).

13–18 contacts GTP; that stretch reads GSGKST. The Gly-Pro-Asn (GPN)-loop; involved in dimer interface motif lies at 72–74; sequence GPN. GTP is bound at residue 174 to 177; it reads TKMD. The tract at residues 262–284 is disordered; sequence EPREHEEESSSMFDEYFQERQNE.

This sequence belongs to the GPN-loop GTPase family. Heterodimer with GPN1. Binds to RNA polymerase II (RNAPII). Interacts directly with subunits RPB4 and RPB7 and the CTD of RPB1.

Its function is as follows. Small GTPase required for proper localization of RNA polymerase II (RNAPII). May act at an RNAP assembly step prior to nuclear import. The polypeptide is GPN-loop GTPase 3 (Mus musculus (Mouse)).